The sequence spans 351 residues: Histidine protein kinase SaeS (351 aa).

2 helical membrane-spanning segments follow: residues 9–29 (IIIG…IAYI) and 40–60 (TLTL…SIFI). An HAMP domain is found at 61 to 114 (NPLIQKIKQFNIKTKQFANGNYASNDKTFNSPKEIYELNQSFNKMASEITQQMN). The 220-residue stretch at 129 to 348 (NLAHDLKTPL…TMTVTLHKLD (220 aa)) folds into the Histidine kinase domain. Position 132 is a phosphohistidine; by autocatalysis (His-132).

Post-translationally, autophosphorylated.

It is found in the cell membrane. The catalysed reaction is ATP + protein L-histidine = ADP + protein N-phospho-L-histidine.. Functionally, member of the two-component regulatory system SaeR/SaeS involved in the regulation of staphylococcal virulence factors in a strain-dependent fashion. Probably functions as a membrane-associated protein kinase that upon sensing the appropriate signal, autophosphorylates and in turn activates the cytosolic response regulator SaeR. This Staphylococcus aureus (strain MRSA252) protein is Histidine protein kinase SaeS (saeS).